Consider the following 560-residue polypeptide: Serine palmitoyltransferase 2 (560 aa).

Residues 65 to 85 form a helical membrane-spanning segment; sequence PMLVAVLTYVGYGVLTLFGYL. Position 377 is an N6-(pyridoxal phosphate)lysine (K377).

The protein belongs to the class-II pyridoxal-phosphate-dependent aminotransferase family. As to quaternary structure, component of the serine palmitoyltransferase (SPT) complex, which is composed of SPTLC1, SPTLC2 or SPTLC3 and SPTSSA or SPTSSB. The heterodimer consisting of SPTLC1 and SPTLC2/SPTLC3 forms the catalytic core of the enzyme, while SPTSSA or SPTSSB subunits determine substrate specificity. SPT also interacts with ORMDL proteins, especially ORMDL3, which negatively regulate SPT activity in the presence of ceramides. Forms dimers of heterodimers with SPTLC1. Pyridoxal 5'-phosphate serves as cofactor. In terms of tissue distribution, expressed in a variety of tissues. Expressed in brains cortices (at protein level). Expressed in brown and white adipose tissues. Expressed in liver.

The protein resides in the endoplasmic reticulum membrane. It catalyses the reaction L-serine + hexadecanoyl-CoA + H(+) = 3-oxosphinganine + CO2 + CoA. The enzyme catalyses octadecanoyl-CoA + L-serine + H(+) = 3-oxoeicosasphinganine + CO2 + CoA. It functions in the pathway lipid metabolism; sphingolipid metabolism. SPT complex catalytic activity is negatively regulated by ORMDL proteins, including ORMDL3, in the presence of ceramides. This mechanism allows to maintain ceramide levels at sufficient concentrations for the production of complex sphingolipids, but which prevents the accumulation of ceramides to levels that trigger apoptosis. In terms of biological role, component of the serine palmitoyltransferase multisubunit enzyme (SPT) that catalyzes the initial and rate-limiting step in sphingolipid biosynthesis by condensing L-serine and activated acyl-CoA (most commonly palmitoyl-CoA) to form long-chain bases. The SPT complex is composed of SPTLC1, SPTLC2 or SPTLC3 and SPTSSA or SPTSSB. Within this complex, the heterodimer consisting of SPTLC1 and SPTLC2/SPTLC3 forms the catalytic core. The composition of the serine palmitoyltransferase (SPT) complex determines the substrate preference. The SPTLC1-SPTLC2-SPTSSA complex shows a strong preference for C16-CoA substrate, while the SPTLC1-SPTLC3-SPTSSA isozyme uses both C14-CoA and C16-CoA as substrates, with a slight preference for C14-CoA. The SPTLC1-SPTLC2-SPTSSB complex shows a strong preference for C18-CoA substrate, while the SPTLC1-SPTLC3-SPTSSB isozyme displays an ability to use a broader range of acyl-CoAs, without apparent preference. Crucial for adipogenesis. The sequence is that of Serine palmitoyltransferase 2 from Mus musculus (Mouse).